Consider the following 552-residue polypeptide: Dihydroxy-acid dehydratase (552 aa).

Asp-78 serves as a coordination point for Mg(2+). Cys-119 serves as a coordination point for [2Fe-2S] cluster. Residues Asp-120 and Lys-121 each coordinate Mg(2+). Lys-121 is modified (N6-carboxylysine). Cys-190 serves as a coordination point for [2Fe-2S] cluster. Residue Glu-441 coordinates Mg(2+). The active-site Proton acceptor is Ser-467.

It belongs to the IlvD/Edd family. As to quaternary structure, homodimer. The cofactor is [2Fe-2S] cluster. Requires Mg(2+) as cofactor.

The enzyme catalyses (2R)-2,3-dihydroxy-3-methylbutanoate = 3-methyl-2-oxobutanoate + H2O. The catalysed reaction is (2R,3R)-2,3-dihydroxy-3-methylpentanoate = (S)-3-methyl-2-oxopentanoate + H2O. Its pathway is amino-acid biosynthesis; L-isoleucine biosynthesis; L-isoleucine from 2-oxobutanoate: step 3/4. It participates in amino-acid biosynthesis; L-valine biosynthesis; L-valine from pyruvate: step 3/4. Functionally, functions in the biosynthesis of branched-chain amino acids. Catalyzes the dehydration of (2R,3R)-2,3-dihydroxy-3-methylpentanoate (2,3-dihydroxy-3-methylvalerate) into 2-oxo-3-methylpentanoate (2-oxo-3-methylvalerate) and of (2R)-2,3-dihydroxy-3-methylbutanoate (2,3-dihydroxyisovalerate) into 2-oxo-3-methylbutanoate (2-oxoisovalerate), the penultimate precursor to L-isoleucine and L-valine, respectively. The chain is Dihydroxy-acid dehydratase from Ignicoccus hospitalis (strain KIN4/I / DSM 18386 / JCM 14125).